A 203-amino-acid polypeptide reads, in one-letter code: Small ribosomal subunit protein uS4 (203 aa).

Positions 20 to 45 (LPGLTRKRPKNTNPPGMHGAERKKKS) are disordered. An S4 RNA-binding domain is found at 92–155 (MRLDCIVFRL…SSRKLVAAYA (64 aa)).

This sequence belongs to the universal ribosomal protein uS4 family. Part of the 30S ribosomal subunit. Contacts protein S5. The interaction surface between S4 and S5 is involved in control of translational fidelity.

Its function is as follows. One of the primary rRNA binding proteins, it binds directly to 16S rRNA where it nucleates assembly of the body of the 30S subunit. With S5 and S12 plays an important role in translational accuracy. In Synechococcus sp. (strain JA-3-3Ab) (Cyanobacteria bacterium Yellowstone A-Prime), this protein is Small ribosomal subunit protein uS4.